The following is a 693-amino-acid chain: Glycine--tRNA ligase beta subunit (693 aa).

It belongs to the class-II aminoacyl-tRNA synthetase family. As to quaternary structure, tetramer of two alpha and two beta subunits.

It is found in the cytoplasm. It carries out the reaction tRNA(Gly) + glycine + ATP = glycyl-tRNA(Gly) + AMP + diphosphate. This is Glycine--tRNA ligase beta subunit from Vibrio vulnificus (strain YJ016).